Reading from the N-terminus, the 263-residue chain is Proteasome subunit alpha type-1 (263 aa).

An N-acetylmethionine modification is found at methionine 1. Serine 110 is modified (phosphoserine; alternate). Residue serine 110 is glycosylated (O-linked (GlcNAc) serine; alternate). Lysine 115 is covalently cross-linked (Glycyl lysine isopeptide (Lys-Gly) (interchain with G-Cter in ubiquitin)). Serine 177 carries the phosphoserine modification. Lysine 208 participates in a covalent cross-link: Glycyl lysine isopeptide (Lys-Gly) (interchain with G-Cter in ubiquitin). Residues 232–263 (FLDGLEERPQRKAQPSQAAEEPAEKADEPMEH) are disordered. Residues 253-263 (PAEKADEPMEH) show a composition bias toward basic and acidic residues.

The protein belongs to the peptidase T1A family. As to quaternary structure, the 26S proteasome consists of a 20S proteasome core and two 19S regulatory subunits. The 20S proteasome core is a barrel-shaped complex made of 28 subunits that are arranged in four stacked rings. The two outer rings are each formed by seven alpha subunits, and the two inner rings are formed by seven beta subunits. The proteolytic activity is exerted by three beta-subunits PSMB5, PSMB6 and PSMB7. Interacts with NOTCH3. Interacts with ZFAND1. Post-translationally, C-terminal extension is partially cleaved off by limited proteolysis leading to a conversion of the proteasome from its latent into its active form. As to expression, detected in liver (at protein level).

It localises to the cytoplasm. Its subcellular location is the nucleus. In terms of biological role, component of the 20S core proteasome complex involved in the proteolytic degradation of most intracellular proteins. This complex plays numerous essential roles within the cell by associating with different regulatory particles. Associated with two 19S regulatory particles, forms the 26S proteasome and thus participates in the ATP-dependent degradation of ubiquitinated proteins. The 26S proteasome plays a key role in the maintenance of protein homeostasis by removing misfolded or damaged proteins that could impair cellular functions, and by removing proteins whose functions are no longer required. Associated with the PA200 or PA28, the 20S proteasome mediates ubiquitin-independent protein degradation. This type of proteolysis is required in several pathways including spermatogenesis (20S-PA200 complex) or generation of a subset of MHC class I-presented antigenic peptides (20S-PA28 complex). The chain is Proteasome subunit alpha type-1 (Psma1) from Mus musculus (Mouse).